A 229-amino-acid polypeptide reads, in one-letter code: Orotate phosphoribosyltransferase (229 aa).

5-phospho-alpha-D-ribose 1-diphosphate is bound by residues arginine 107, lysine 108, lysine 111, histidine 113, and 133–141 (EDLTTAGGS). Residue threonine 137 participates in orotate binding.

The protein belongs to the purine/pyrimidine phosphoribosyltransferase family. PyrE subfamily. As to quaternary structure, homodimer. The cofactor is Mg(2+).

The catalysed reaction is orotidine 5'-phosphate + diphosphate = orotate + 5-phospho-alpha-D-ribose 1-diphosphate. Its pathway is pyrimidine metabolism; UMP biosynthesis via de novo pathway; UMP from orotate: step 1/2. Functionally, catalyzes the transfer of a ribosyl phosphate group from 5-phosphoribose 1-diphosphate to orotate, leading to the formation of orotidine monophosphate (OMP). This is Orotate phosphoribosyltransferase from Rhizobium johnstonii (strain DSM 114642 / LMG 32736 / 3841) (Rhizobium leguminosarum bv. viciae).